The chain runs to 106 residues: Acidic phospholipase A2 PhTX-III (106 aa).

Positions 23, 25, and 27 each coordinate Ca(2+). Cystine bridges form between C24–C40, C39–C75, C45–C106, C46–C68, and C55–C66. Residue H43 is part of the active site. D44 contacts Ca(2+). Residue D69 is part of the active site.

The cofactor is Ca(2+). As to expression, expressed by the venom gland.

It is found in the secreted. It catalyses the reaction a 1,2-diacyl-sn-glycero-3-phosphocholine + H2O = a 1-acyl-sn-glycero-3-phosphocholine + a fatty acid + H(+). Its activity is regulated as follows. Partially inhibited by magnesium ions and completely inhibited by zinc ions These divalent cations may act as competitive antagonists of the cofactor. In terms of biological role, snake venom phospholipase A2 (PLA2) that induces inflammatory response, with local edema and release of cytokines IL-1 alpha, IL-6 and TNF-alpha. Does not exhibit myotoxic, anticoagulant and antibacterial effects. Release of pro-inflammatory cytokines may be due to mast cell degranulation, and edema may be induced by arachidonic acid that results from the PLA2 catalytic activity. PLA2 catalyzes the calcium-dependent hydrolysis of the 2-acyl groups in 3-sn-phosphoglycerides. The sequence is that of Acidic phospholipase A2 PhTX-III from Bothrocophias hyoprora (Amazonian hognose viper).